A 433-amino-acid polypeptide reads, in one-letter code: Phosphomethylpyrimidine synthase (433 aa).

Substrate contacts are provided by residues asparagine 66, methionine 94, tyrosine 123, histidine 162, 184–186 (SRG), 225–228 (DALR), and glutamate 264. Zn(2+) is bound at residue histidine 268. Tyrosine 291 is a binding site for substrate. Position 332 (histidine 332) interacts with Zn(2+). 3 residues coordinate [4Fe-4S] cluster: cysteine 408, cysteine 411, and cysteine 415.

It belongs to the ThiC family. It depends on [4Fe-4S] cluster as a cofactor.

The enzyme catalyses 5-amino-1-(5-phospho-beta-D-ribosyl)imidazole + S-adenosyl-L-methionine = 4-amino-2-methyl-5-(phosphooxymethyl)pyrimidine + CO + 5'-deoxyadenosine + formate + L-methionine + 3 H(+). The protein operates within cofactor biosynthesis; thiamine diphosphate biosynthesis. Functionally, catalyzes the synthesis of the hydroxymethylpyrimidine phosphate (HMP-P) moiety of thiamine from aminoimidazole ribotide (AIR) in a radical S-adenosyl-L-methionine (SAM)-dependent reaction. The polypeptide is Phosphomethylpyrimidine synthase (Saccharolobus islandicus (strain M.16.27) (Sulfolobus islandicus)).